Reading from the N-terminus, the 252-residue chain is L-aspartate dehydrogenase (252 aa).

Alanine 119 and asparagine 175 together coordinate NAD(+). The active site involves histidine 203.

It belongs to the L-aspartate dehydrogenase family.

The catalysed reaction is L-aspartate + NADP(+) + H2O = oxaloacetate + NH4(+) + NADPH + H(+). The enzyme catalyses L-aspartate + NAD(+) + H2O = oxaloacetate + NH4(+) + NADH + H(+). The protein operates within cofactor biosynthesis; NAD(+) biosynthesis; iminoaspartate from L-aspartate (dehydrogenase route): step 1/1. Its function is as follows. Specifically catalyzes the NAD or NADP-dependent dehydrogenation of L-aspartate to iminoaspartate. The chain is L-aspartate dehydrogenase from Methanospirillum hungatei JF-1 (strain ATCC 27890 / DSM 864 / NBRC 100397 / JF-1).